A 329-amino-acid chain; its full sequence is Minor capsid protein A1 (329 aa).

The interval 143–162 (GPSPVPGPNPDPPLEPPPGT) is disordered. Residues 145–161 (SPVPGPNPDPPLEPPPG) are compositionally biased toward pro residues.

The protein resides in the virion. Functionally, minor capsid protein. This is Minor capsid protein A1 from Qbeta virus (strain MX1).